Consider the following 279-residue polypeptide: B3 domain-containing protein Os11g0156000 (279 aa).

Residues 38–144 (FEKPLTPSDV…DRLFIGCRRR (107 aa)) constitute a DNA-binding region (TF-B3). Disordered stretches follow at residues 148-182 (AAAQ…YSTS) and 203-228 (HDHG…AGSA). The span at 159–168 (VRVAPAAQNA) shows a compositional bias: low complexity. Residues 203 to 219 (HDHGDMHHADESPRDTD) show a composition bias toward basic and acidic residues.

The protein localises to the nucleus. The chain is B3 domain-containing protein Os11g0156000 from Oryza sativa subsp. japonica (Rice).